A 342-amino-acid polypeptide reads, in one-letter code: Ribosomal RNA small subunit methyltransferase H (342 aa).

S-adenosyl-L-methionine-binding positions include 36 to 38 (GGH), Asp-56, Phe-82, Asp-100, and Gln-107. The tract at residues 309–342 (ENRESGMGKGHGAAASRFPTPDSRFPTSPNGDAP) is disordered. The span at 333 to 342 (FPTSPNGDAP) shows a compositional bias: polar residues.

It belongs to the methyltransferase superfamily. RsmH family.

The protein localises to the cytoplasm. It carries out the reaction cytidine(1402) in 16S rRNA + S-adenosyl-L-methionine = N(4)-methylcytidine(1402) in 16S rRNA + S-adenosyl-L-homocysteine + H(+). Functionally, specifically methylates the N4 position of cytidine in position 1402 (C1402) of 16S rRNA. The sequence is that of Ribosomal RNA small subunit methyltransferase H from Xanthomonas campestris pv. campestris (strain B100).